Here is a 458-residue protein sequence, read N- to C-terminus: Putative long chain fatty acid-CoA ligase VraA (458 aa).

This sequence belongs to the ATP-dependent AMP-binding enzyme family.

This chain is Putative long chain fatty acid-CoA ligase VraA (vraA), found in Staphylococcus aureus (strain Mu3 / ATCC 700698).